A 474-amino-acid polypeptide reads, in one-letter code: Crocetin glucosyltransferase, chloroplastic (474 aa).

Residues 1–45 (MVQQRHVLLITYPAQGHINPALQFAQRLLRMGIQVTLATSVYALS) constitute a chloroplast transit peptide. His-17 acts as the Proton acceptor in catalysis. His-17 contributes to the an anthocyanidin binding site. Residues Gln-346, His-361, Trp-364, Asn-365, Ser-366, Glu-369, Asp-385, and Gln-386 each coordinate UDP-alpha-D-glucose.

The protein belongs to the UDP-glycosyltransferase family. In terms of tissue distribution, ubiquitous.

Its subcellular location is the plastid. The protein localises to the chloroplast. The catalysed reaction is crocetin + UDP-alpha-D-glucose = beta-D-glucosyl crocetin + UDP. It catalyses the reaction beta-D-glucosyl crocetin + UDP-alpha-D-glucose = bis(beta-D-glucosyl) crocetin + UDP. The enzyme catalyses beta-D-gentiobiosyl crocetin + UDP-alpha-D-glucose = beta-D-gentiobiosyl beta-D-glucosyl crocetin + UDP. In terms of biological role, glucosyltransferase acting on a broad range of substrates, including crocetin, 4-coumaric acid, caffeic acid and ferulic acid. No activity with indol-3-acetic acid, bixin and norbixin, and no formation of O-glucosides. Involved with UGT94E5 in sequential glycosylation of crocetin to crocin (bis(beta-D-gentiobiosyl) crocetin). This chain is Crocetin glucosyltransferase, chloroplastic (UGT75L6), found in Gardenia jasminoides (Cape jasmine).